Reading from the N-terminus, the 211-residue chain is ATP phosphoribosyltransferase (211 aa).

This sequence belongs to the ATP phosphoribosyltransferase family. Short subfamily. Heteromultimer composed of HisG and HisZ subunits.

It is found in the cytoplasm. The enzyme catalyses 1-(5-phospho-beta-D-ribosyl)-ATP + diphosphate = 5-phospho-alpha-D-ribose 1-diphosphate + ATP. It participates in amino-acid biosynthesis; L-histidine biosynthesis; L-histidine from 5-phospho-alpha-D-ribose 1-diphosphate: step 1/9. Catalyzes the condensation of ATP and 5-phosphoribose 1-diphosphate to form N'-(5'-phosphoribosyl)-ATP (PR-ATP). Has a crucial role in the pathway because the rate of histidine biosynthesis seems to be controlled primarily by regulation of HisG enzymatic activity. This Lacticaseibacillus casei (strain BL23) (Lactobacillus casei) protein is ATP phosphoribosyltransferase.